We begin with the raw amino-acid sequence, 392 residues long: tRNA (guanine-N(7)-)-methyltransferase (392 aa).

3 residues coordinate S-adenosyl-L-methionine: Glu-123, Glu-148, and Asp-175. Substrate-binding residues include Lys-201 and Asp-231.

The protein belongs to the class I-like SAM-binding methyltransferase superfamily. TrmB family.

The enzyme catalyses guanosine(46) in tRNA + S-adenosyl-L-methionine = N(7)-methylguanosine(46) in tRNA + S-adenosyl-L-homocysteine. It participates in tRNA modification; N(7)-methylguanine-tRNA biosynthesis. Catalyzes the formation of N(7)-methylguanine at position 46 (m7G46) in tRNA. The protein is tRNA (guanine-N(7)-)-methyltransferase of Campylobacter jejuni (strain RM1221).